Here is a 559-residue protein sequence, read N- to C-terminus: Putative ankyrin repeat protein RBE_0902 (559 aa).

ANK repeat units lie at residues 11-40 (DGWTVLTFAAAYGLEKVCEALIPKMSEQAI), 46-75 (DGNTALTWAAYTGLEKVCEALIPKMSDQAI), 81-110 (DGNTALSIARNKGFKNMCDLLTTIEATKQN), 158-189 (DDWTALTFAAAYGLEKVCELLIPKMTDQVINH), 228-257 (NNDTVLTLAANKSLGKICEILIPKMTDQAI), 263-292 (DGNTALIAAASSHLEKICEALIPKMSDQAI), 298-327 (YGNTALIAAASSGLEKVCETLIPKMTEQAI), 333-364 (QCDTALIFAVRNSLKKVCEVLIPKMSYEAINC), 372-402 (FGFTAFTWVTLNGDKKICELLIPKTSPEVII), and 524-554 (IDNNEIHISCLTTEIIAHIVEYLENEKWGLE).

The protein is Putative ankyrin repeat protein RBE_0902 of Rickettsia bellii (strain RML369-C).